The primary structure comprises 326 residues: MASILELRSRIKSVNSTKKITKAQELIATSRITKAQSRVAAAKPYAEEITKVLSELASASASLDHPLLNERTDPKRAAVLVVTSDRGMCGGYNSNVLKEAEELFQLLRSEGKDPVIYVLGSKGLGYYTFRGRDLGGAWTGFSQDPGYSDAAKASRHLVDLFMAGSGSEVPAPNGEGTIEGVDELHIVYTRFVSMLTQSPEVRRMAPLEVMVSEERVELGEDMLSNGHGSSDSEPVAGYNFEPEPDKLLGALLPKYISTRIYSSLLDAAASESAARRTAMKAATDNANELVNTLSRQANQARQAQITQEISEIVGGANALASSAGSD.

The protein belongs to the ATPase gamma chain family. As to quaternary structure, F-type ATPases have 2 components, CF(1) - the catalytic core - and CF(0) - the membrane proton channel. CF(1) has five subunits: alpha(3), beta(3), gamma(1), delta(1), epsilon(1). CF(0) has three main subunits: a, b and c.

It is found in the cell membrane. In terms of biological role, produces ATP from ADP in the presence of a proton gradient across the membrane. The gamma chain is believed to be important in regulating ATPase activity and the flow of protons through the CF(0) complex. The chain is ATP synthase gamma chain from Rhodococcus jostii (strain RHA1).